The primary structure comprises 236 residues: Eukaryotic translation initiation factor 3 subunit J (236 aa).

A disordered region spans residues 1 to 84; that stretch reads MADDWESAAD…RLEEEAEAQR (84 aa). Acidic residues predominate over residues 28–46; the sequence is GEDEDEDIKDSWEDEEEKK. 2 stretches are compositionally biased toward basic and acidic residues: residues 47-58 and 68-77; these read DEEKPTKTEAPA and AKLEQQARLE.

The protein belongs to the eIF-3 subunit J family. As to quaternary structure, component of the eukaryotic translation initiation factor 3 (eIF-3) complex. The eIF-3 complex interacts with pix.

It is found in the cytoplasm. Component of the eukaryotic translation initiation factor 3 (eIF-3) complex, which is involved in protein synthesis of a specialized repertoire of mRNAs and, together with other initiation factors, stimulates binding of mRNA and methionyl-tRNAi to the 40S ribosome. The eIF-3 complex specifically targets and initiates translation of a subset of mRNAs involved in cell proliferation. The polypeptide is Eukaryotic translation initiation factor 3 subunit J (Drosophila yakuba (Fruit fly)).